We begin with the raw amino-acid sequence, 259 residues long: Large ribosomal subunit protein uL3c (259 aa).

A chloroplast-targeting transit peptide spans 1-37; the sequence is LKTTPLTLRSPFLHRLPLRALKTHKPTSLHISKSSIS. The interval 176–211 is disordered; it reads MTHGSKSHRQLGSIGAGTTPGRVYKGKKMPGRMGGT. Over residues 199–211 the composition is skewed to basic residues; that stretch reads YKGKKMPGRMGGT.

It belongs to the universal ribosomal protein uL3 family. As to quaternary structure, part of the 50S ribosomal subunit.

The protein localises to the plastid. The protein resides in the chloroplast. Its function is as follows. One of the primary rRNA binding proteins, it binds directly near the 3'-end of the 23S rRNA, where it nucleates assembly of the 50S subunit. The protein is Large ribosomal subunit protein uL3c (RPL3) of Nicotiana tabacum (Common tobacco).